A 4451-amino-acid chain; its full sequence is Gramicidin S synthase 2 (4451 aa).

Positions 467–1044 (DKTIHQLFTE…IQEISNYING (578 aa)) are domain 1 (proline-activating). 4 consecutive Carrier domains span residues 971–1046 (VPTN…NGAK), 2006–2081 (APSS…ADGQ), 3052–3127 (RPRT…EETD), and 4090–4165 (APRN…THQE). O-(pantetheine 4'-phosphoryl)serine is present on residues Ser1006, Ser2041, Ser3087, and Ser4125. The domain 2 (valine-activating) stretch occupies residues 1521–2080 (DHVAVGWKDQ…SALAQYIADG (560 aa)). The segment at 2538–3135 (YATNKIFHEL…TDTEQYMAIQ (598 aa)) is domain 3 (ornithine-activating). The tract at residues 3591–4173 (IQELFEEQVK…QESENNVHQP (583 aa)) is domain 4 (leucine-activating).

It belongs to the ATP-dependent AMP-binding enzyme family. In terms of assembly, large multienzyme complex of GrsA and GrsB. It depends on pantetheine 4'-phosphate as a cofactor.

Its pathway is antibiotic biosynthesis; gramicidin S biosynthesis. In terms of biological role, this protein is a multifunctional enzyme, able to activate and polymerize the amino acids Pro, Val, Orn and Leu. Activation sites for these AA consist of individual domains. The polypeptide is Gramicidin S synthase 2 (grsB) (Aneurinibacillus migulanus (Bacillus migulanus)).